The following is a 331-amino-acid chain: 6-phosphogluconolactonase (331 aa).

This sequence belongs to the cycloisomerase 2 family.

It carries out the reaction 6-phospho-D-glucono-1,5-lactone + H2O = 6-phospho-D-gluconate + H(+). Its pathway is carbohydrate degradation; pentose phosphate pathway; D-ribulose 5-phosphate from D-glucose 6-phosphate (oxidative stage): step 2/3. In terms of biological role, catalyzes the hydrolysis of 6-phosphogluconolactone to 6-phosphogluconate. The chain is 6-phosphogluconolactonase from Salmonella agona (strain SL483).